The following is a 115-amino-acid chain: DNA-directed RNA polymerase subunit omega (115 aa).

This sequence belongs to the RNA polymerase subunit omega family. The RNAP catalytic core consists of 2 alpha, 1 beta, 1 beta' and 1 omega subunit. When a sigma factor is associated with the core the holoenzyme is formed, which can initiate transcription.

It carries out the reaction RNA(n) + a ribonucleoside 5'-triphosphate = RNA(n+1) + diphosphate. Promotes RNA polymerase assembly. Latches the N- and C-terminal regions of the beta' subunit thereby facilitating its interaction with the beta and alpha subunits. This chain is DNA-directed RNA polymerase subunit omega, found in Cutibacterium acnes (strain DSM 16379 / KPA171202) (Propionibacterium acnes).